The chain runs to 444 residues: Serine--tRNA ligase (444 aa).

Residue Thr249–Glu251 coordinates L-serine. Residues Arg280–Glu282 and Val296 each bind ATP. Glu303 provides a ligand contact to L-serine. An ATP-binding site is contributed by Glu367–Ser370. Thr401 contributes to the L-serine binding site.

This sequence belongs to the class-II aminoacyl-tRNA synthetase family. Type-1 seryl-tRNA synthetase subfamily. Homodimer. The tRNA molecule binds across the dimer.

It localises to the cytoplasm. It catalyses the reaction tRNA(Ser) + L-serine + ATP = L-seryl-tRNA(Ser) + AMP + diphosphate + H(+). The enzyme catalyses tRNA(Sec) + L-serine + ATP = L-seryl-tRNA(Sec) + AMP + diphosphate + H(+). The protein operates within aminoacyl-tRNA biosynthesis; selenocysteinyl-tRNA(Sec) biosynthesis; L-seryl-tRNA(Sec) from L-serine and tRNA(Sec): step 1/1. In terms of biological role, catalyzes the attachment of serine to tRNA(Ser). Is also able to aminoacylate tRNA(Sec) with serine, to form the misacylated tRNA L-seryl-tRNA(Sec), which will be further converted into selenocysteinyl-tRNA(Sec). This chain is Serine--tRNA ligase, found in Picrophilus torridus (strain ATCC 700027 / DSM 9790 / JCM 10055 / NBRC 100828 / KAW 2/3).